Reading from the N-terminus, the 263-residue chain is Proliferating cell nuclear antigen (263 aa).

Residues 61–80 mediate DNA binding; that stretch reads RCDRNLSMGMNLNNMAKMLR.

The protein belongs to the PCNA family. Homotrimer. Interacts with FEN1A. Interacts with POLL. Interacts with RAD/GEN1. Interacts with DJA7 and DJA8. In terms of tissue distribution, expressed in proliferating tissues. Expressed in roots and root apex. Expressed at low levels in young leaves. Not detected in mature leaves. Highly expressed in shoot apical meristem (SAM). Expressed in flag leaves and panicles.

The protein resides in the nucleus. Its function is as follows. This protein is an auxiliary protein of DNA polymerase delta and is involved in the control of eukaryotic DNA replication by increasing the polymerase's processibility during elongation of the leading strand. In Oryza sativa subsp. japonica (Rice), this protein is Proliferating cell nuclear antigen.